We begin with the raw amino-acid sequence, 376 residues long: NIF3-like protein 1 (376 aa).

K108 carries the N6-acetyllysine modification. The mediates interaction with COPS2 stretch occupies residues 243–376 (LLLHTGMGRL…ETDRDPLRVV (134 aa)). T254 carries the post-translational modification Phosphothreonine. S258 is subject to Phosphoserine.

It belongs to the GTP cyclohydrolase I type 2/NIF3 family. Homodimer. Interacts with COPS2. Interacts with THOC7.

Its subcellular location is the cytoplasm. It is found in the nucleus. Functionally, may function as a transcriptional corepressor through its interaction with COPS2, negatively regulating the expression of genes involved in neuronal differentiation. The protein is NIF3-like protein 1 of Rattus norvegicus (Rat).